The chain runs to 231 residues: NADH-ubiquinone oxidoreductase chain 4 (231 aa).

6 helical membrane passes run 1–21, 34–54, 63–85, 89–111, 128–148, and 156–176; these read PIAG…YGII, MFLP…LTCL, IAYS…TPWG, AMAL…NTTY, ILPM…ATPP, and LLIM…LGLS.

It belongs to the complex I subunit 4 family.

It is found in the mitochondrion membrane. It catalyses the reaction a ubiquinone + NADH + 5 H(+)(in) = a ubiquinol + NAD(+) + 4 H(+)(out). Core subunit of the mitochondrial membrane respiratory chain NADH dehydrogenase (Complex I) that is believed to belong to the minimal assembly required for catalysis. Complex I functions in the transfer of electrons from NADH to the respiratory chain. The immediate electron acceptor for the enzyme is believed to be ubiquinone. This chain is NADH-ubiquinone oxidoreductase chain 4 (MT-ND4), found in Trimeresurus stejnegeri (Chinese green tree viper).